Here is a 1076-residue protein sequence, read N- to C-terminus: Guanylyl cyclase C (1076 aa).

A signal peptide spans 1-23 (MKSPLLGLVVWSLLLQLLQPGLA). Topologically, residues 24-433 (FWNSQISQNC…PHDIPGLGPH (410 aa)) are extracellular. N-linked (GlcNAc...) asparagine glycans are attached at residues Asn-35, Asn-82, Asn-191, Asn-198, Asn-287, Asn-306, Asn-310, Asn-348, and Asn-405. The chain crosses the membrane as a helical span at residues 434-457 (ILLIAVCTLAGVVVLILLIALLVL). The Cytoplasmic segment spans residues 458–1076 (RKYKKDNELR…NTTDQDSTYF (619 aa)). Residues 492 to 752 (LKIDDDKKRD…KIENTLAKIF (261 aa)) enclose the Protein kinase domain. One can recognise a Guanylate cyclase domain in the interval 827 to 957 (TVYFSDIVGF…DTVNTASRME (131 aa)).

Belongs to the adenylyl cyclase class-4/guanylyl cyclase family. In terms of assembly, homotrimer. Interacts via its C-terminal region with NHERF4. Interacts with the lectin chaperone VIP36. Post-translationally, glycosylation at Asn-62 is required for interaction with VIP36 while glycosylation at Asn-348 and Asn-405 modulates ligand-mediated GC-C activation.

It localises to the cell membrane. The protein localises to the endoplasmic reticulum membrane. It catalyses the reaction GTP = 3',5'-cyclic GMP + diphosphate. In terms of biological role, guanylyl cyclase that catalyzes synthesis of cyclic GMP (cGMP) from GTP. The protein is Guanylyl cyclase C (GUCY2C) of Cavia porcellus (Guinea pig).